Reading from the N-terminus, the 504-residue chain is Xylose import ATP-binding protein XylG (504 aa).

ABC transporter domains follow at residues 6–243 (LEMK…VGRE) and 260–504 (LKVD…TGGK). ATP is bound at residue 38–45 (GENGAGKS).

Belongs to the ABC transporter superfamily. Xylose importer (TC 3.A.1.2.4) family. The complex is composed of two ATP-binding proteins (XylG), two transmembrane proteins (XylH) and a solute-binding protein (XylF).

It localises to the cell membrane. The enzyme catalyses D-xylose(out) + ATP + H2O = D-xylose(in) + ADP + phosphate + H(+). Part of the ABC transporter complex XylFGH involved in xylose import. Responsible for energy coupling to the transport system. The polypeptide is Xylose import ATP-binding protein XylG (Geobacillus kaustophilus (strain HTA426)).